A 146-amino-acid chain; its full sequence is Hemoglobin subunit beta (146 aa).

Val-1 carries the post-translational modification N-acetylvaline. A Globin domain is found at 2-146 (HLTGEEKSLV…VANALAHKYH (145 aa)). Phosphothreonine is present on Thr-12. Position 44 is a phosphoserine (Ser-44). At Lys-59 the chain carries N6-acetyllysine. His-63 is a binding site for heme b. Lys-82 carries the post-translational modification N6-acetyllysine. His-92 serves as a coordination point for heme b. S-nitrosocysteine is present on Cys-93. Lys-144 bears the N6-acetyllysine mark.

This sequence belongs to the globin family. As to quaternary structure, heterotetramer of two alpha chains and two beta chains. As to expression, red blood cells.

Functionally, involved in oxygen transport from the lung to the various peripheral tissues. This is Hemoglobin subunit beta (HBB) from Ursus maritimus (Polar bear).